A 177-amino-acid polypeptide reads, in one-letter code: Centromere protein R (177 aa).

Residue Lys-8 forms a Glycyl lysine isopeptide (Lys-Gly) (interchain with G-Cter in SUMO2) linkage. The LXXLL motif signature appears at 9 to 13 (LDGLL). Ser-17 is modified (phosphoserine). Residues 20 to 50 (PSKITRKKSVITYSPTTGTCQMSLFASPTSS) are DD1. Residue Lys-22 forms a Glycyl lysine isopeptide (Lys-Gly) (interchain with G-Cter in SUMO2) linkage. Residue Ser-28 is modified to Phosphoserine. Residues 41 to 50 (MSLFASPTSS) show a composition bias toward polar residues. A disordered region spans residues 41-81 (MSLFASPTSSEEQKHRNGLSNEKRKKLNHPSLTESKESTTK). A Nuclear localization signal motif is present at residues 63–66 (KRKK). Ser-71 is subject to Phosphoserine. A coiled-coil region spans residues 83–113 (NDEFMMLLSKVEKLSEEIMEIMQNLSSIQAL). The short motif at 172-176 (LKAIL) is the LXXIL motif element.

In terms of assembly, homodimer; mediated by the coiled coil domain. Isoform 3, but not other isoforms, interacts with the cytoplasmic tail of integrin ITGB3. The relevance of the interaction with ITGB3 is however uncertain, since isoform 3 is mainly nuclear. Interacts with CCNA2 and MTA1. Interacts with NFKB1 NF-kappa-B subunit. Component of the CENPA-CAD complex, composed of CENPI, CENPK, CENPL, CENPO, CENPP, CENPQ, CENPR and CENPS. The CENPA-CAD complex interacts with the CENPA-NAC complex, at least composed of CENPA, CENPC, CENPH, CENPM, CENPN, CENPT and CENPU. Interacts with TASOR. In terms of tissue distribution, widely expressed. Expressed in spleen, thymus, prostate, ovary, small intestine and white blood cells. Highly expressed in testis and colon. Isoform 4 is expressed in platelets, lymphocytes and granulocytes.

The protein localises to the nucleus. It is found in the chromosome. The protein resides in the centromere. It localises to the kinetochore. Its subcellular location is the cytoplasm. Transcription coregulator that can have both coactivator and corepressor functions. Isoform 1, but not other isoforms, is involved in the coactivation of nuclear receptors for retinoid X (RXRs) and thyroid hormone (TRs) in a ligand-dependent fashion. In contrast, it does not coactivate nuclear receptors for retinoic acid, vitamin D, progesterone receptor, nor glucocorticoid. Acts as a coactivator for estrogen receptor alpha. Acts as a transcriptional corepressor via its interaction with the NFKB1 NF-kappa-B subunit, possibly by interfering with the transactivation domain of NFKB1. Induces apoptosis in breast cancer cells, but not in other cancer cells, via a caspase-2 mediated pathway that involves mitochondrial membrane permeabilization but does not require other caspases. May also act as an inhibitor of cyclin A-associated kinase. Also acts a component of the CENPA-CAD (nucleosome distal) complex, a complex recruited to centromeres which is involved in assembly of kinetochore proteins, mitotic progression and chromosome segregation. May be involved in incorporation of newly synthesized CENPA into centromeres via its interaction with the CENPA-NAC complex. This Homo sapiens (Human) protein is Centromere protein R (ITGB3BP).